Here is a 138-residue protein sequence, read N- to C-terminus: Large ribosomal subunit protein uL16 (138 aa).

A compositionally biased stretch (basic residues) spans 1–15 (MLSPRKVKYRKKQRG). The segment at 1–21 (MLSPRKVKYRKKQRGRLSGEA) is disordered.

It belongs to the universal ribosomal protein uL16 family. In terms of assembly, part of the 50S ribosomal subunit.

Its function is as follows. Binds 23S rRNA and is also seen to make contacts with the A and possibly P site tRNAs. In Borrelia duttonii (strain Ly), this protein is Large ribosomal subunit protein uL16.